Consider the following 340-residue polypeptide: Lysophospholipase L2 (340 aa).

The protein resides in the cell inner membrane. The enzyme catalyses a 1-acyl-sn-glycero-3-phosphocholine + H2O = sn-glycerol 3-phosphocholine + a fatty acid + H(+). The sequence is that of Lysophospholipase L2 (pldB) from Escherichia coli O6:H1 (strain CFT073 / ATCC 700928 / UPEC).